A 568-amino-acid polypeptide reads, in one-letter code: Urease subunit alpha (568 aa).

The 439-residue stretch at 130-568 folds into the Urease domain; sequence GGIDTHIHFI…LPMAQRYFLF (439 aa). Histidine 135, histidine 137, and lysine 218 together coordinate Ni(2+). Lysine 218 bears the N6-carboxylysine mark. Histidine 220 serves as a coordination point for substrate. Ni(2+) is bound by residues histidine 247 and histidine 273. Histidine 321 serves as the catalytic Proton donor. Position 361 (aspartate 361) interacts with Ni(2+).

The protein belongs to the metallo-dependent hydrolases superfamily. Urease alpha subunit family. As to quaternary structure, heterotrimer of UreA (gamma), UreB (beta) and UreC (alpha) subunits. Three heterotrimers associate to form the active enzyme. Requires Ni cation as cofactor. Carboxylation allows a single lysine to coordinate two nickel ions.

Its subcellular location is the cytoplasm. The catalysed reaction is urea + 2 H2O + H(+) = hydrogencarbonate + 2 NH4(+). The protein operates within nitrogen metabolism; urea degradation; CO(2) and NH(3) from urea (urease route): step 1/1. In Burkholderia pseudomallei (strain K96243), this protein is Urease subunit alpha.